A 301-amino-acid polypeptide reads, in one-letter code: Ribosomal protein L11 methyltransferase (301 aa).

S-adenosyl-L-methionine-binding residues include threonine 152, glycine 173, aspartate 195, and asparagine 236.

This sequence belongs to the methyltransferase superfamily. PrmA family.

The protein resides in the cytoplasm. The enzyme catalyses L-lysyl-[protein] + 3 S-adenosyl-L-methionine = N(6),N(6),N(6)-trimethyl-L-lysyl-[protein] + 3 S-adenosyl-L-homocysteine + 3 H(+). Its function is as follows. Methylates ribosomal protein L11. This is Ribosomal protein L11 methyltransferase from Dictyoglomus thermophilum (strain ATCC 35947 / DSM 3960 / H-6-12).